A 212-amino-acid chain; its full sequence is Probable chemoreceptor glutamine deamidase CheD (212 aa).

It belongs to the CheD family.

The catalysed reaction is L-glutaminyl-[protein] + H2O = L-glutamyl-[protein] + NH4(+). Its function is as follows. Probably deamidates glutamine residues to glutamate on methyl-accepting chemotaxis receptors (MCPs), playing an important role in chemotaxis. The sequence is that of Probable chemoreceptor glutamine deamidase CheD from Oleidesulfovibrio alaskensis (strain ATCC BAA-1058 / DSM 17464 / G20) (Desulfovibrio alaskensis).